The following is a 257-amino-acid chain: Pantothenate synthetase (257 aa).

Residue 29–36 (MGNLHAGH) coordinates ATP. The active-site Proton donor is His36. Gln60 lines the (R)-pantoate pocket. Gln60 serves as a coordination point for beta-alanine. 145–148 (GEKD) contacts ATP. Gln151 provides a ligand contact to (R)-pantoate. ATP contacts are provided by residues Val174 and 182 to 185 (LSSR).

This sequence belongs to the pantothenate synthetase family. Homodimer.

It is found in the cytoplasm. The enzyme catalyses (R)-pantoate + beta-alanine + ATP = (R)-pantothenate + AMP + diphosphate + H(+). Its pathway is cofactor biosynthesis; (R)-pantothenate biosynthesis; (R)-pantothenate from (R)-pantoate and beta-alanine: step 1/1. Catalyzes the condensation of pantoate with beta-alanine in an ATP-dependent reaction via a pantoyl-adenylate intermediate. The chain is Pantothenate synthetase from Coxiella burnetii (strain CbuK_Q154) (Coxiella burnetii (strain Q154)).